Reading from the N-terminus, the 891-residue chain is Alanine--tRNA ligase (891 aa).

Residues His564, His568, Cys681, and His685 each coordinate Zn(2+).

This sequence belongs to the class-II aminoacyl-tRNA synthetase family. Requires Zn(2+) as cofactor.

The protein localises to the cytoplasm. The enzyme catalyses tRNA(Ala) + L-alanine + ATP = L-alanyl-tRNA(Ala) + AMP + diphosphate. Catalyzes the attachment of alanine to tRNA(Ala) in a two-step reaction: alanine is first activated by ATP to form Ala-AMP and then transferred to the acceptor end of tRNA(Ala). Also edits incorrectly charged Ser-tRNA(Ala) and Gly-tRNA(Ala) via its editing domain. The sequence is that of Alanine--tRNA ligase from Methylorubrum populi (strain ATCC BAA-705 / NCIMB 13946 / BJ001) (Methylobacterium populi).